A 187-amino-acid chain; its full sequence is dCTP deaminase (187 aa).

DCTP-binding positions include 110–115, 134–136, glutamine 155, tyrosine 169, and glutamine 179; these read KSTYAR and TLE. Glutamate 136 (proton donor/acceptor) is an active-site residue.

Belongs to the dCTP deaminase family. Homotrimer.

It catalyses the reaction dCTP + H2O + H(+) = dUTP + NH4(+). The protein operates within pyrimidine metabolism; dUMP biosynthesis; dUMP from dCTP (dUTP route): step 1/2. Functionally, catalyzes the deamination of dCTP to dUTP. The polypeptide is dCTP deaminase (Bordetella bronchiseptica (strain ATCC BAA-588 / NCTC 13252 / RB50) (Alcaligenes bronchisepticus)).